We begin with the raw amino-acid sequence, 89 residues long: Small ribosomal subunit protein uS15 (89 aa).

The protein belongs to the universal ribosomal protein uS15 family. Part of the 30S ribosomal subunit. Forms a bridge to the 50S subunit in the 70S ribosome, contacting the 23S rRNA.

Its function is as follows. One of the primary rRNA binding proteins, it binds directly to 16S rRNA where it helps nucleate assembly of the platform of the 30S subunit by binding and bridging several RNA helices of the 16S rRNA. Forms an intersubunit bridge (bridge B4) with the 23S rRNA of the 50S subunit in the ribosome. The polypeptide is Small ribosomal subunit protein uS15 (Ureaplasma parvum serovar 3 (strain ATCC 27815 / 27 / NCTC 11736)).